We begin with the raw amino-acid sequence, 466 residues long: MSKVATRFAPSPTGALHIGGVRTALFNWLYSKNKNGTFHLRIEDTDKERSKDEHKIQIIKSLKWIGIDHDGDEYIQSTKINDHVNVANELLKNGHAYKCYCSSAEIEEQKKRARQKKLPYVYNRKCRDLQETNAPTIIKPVIRFKIKIEGTSVLKDLVQGDVEIENTTIEDFIILRNDGTPTYNLSATVDDHQMKMTHIIRGDDHKINTFKQMQIYLAMSWDLPNFAHIPLIHTIEGKKLSKRDNASTLDDYSKIGIMPDALRNYLLRLGWSYQDKEIFTLKESIELFNLEGIGKSPSKLDMSRILSLNEHYIKTINENELYDHLVKYCEIYKEKIKPEKETKIKPSLIFLKNKAKTLEDIFNNAKYIIFDDVKFEDKDLELIDDKAKSIIKEFKEKLISINTLNKETLEPIVNDLIKKYETNFKGVGQPLRIALTGSKFGPGLYDIIISLGNEEVERRLGNKIII.

A 'HIGH' region motif is present at residues 10-20 (PSPTGALHIGG). Residues cysteine 99, cysteine 101, cysteine 126, and aspartate 128 each contribute to the Zn(2+) site. The 'KMSKS' region signature appears at 239 to 243 (KLSKR). An ATP-binding site is contributed by lysine 242.

The protein belongs to the class-I aminoacyl-tRNA synthetase family. Glutamate--tRNA ligase type 1 subfamily. In terms of assembly, monomer. Zn(2+) is required as a cofactor.

The protein resides in the cytoplasm. The catalysed reaction is tRNA(Glu) + L-glutamate + ATP = L-glutamyl-tRNA(Glu) + AMP + diphosphate. Functionally, catalyzes the attachment of glutamate to tRNA(Glu) in a two-step reaction: glutamate is first activated by ATP to form Glu-AMP and then transferred to the acceptor end of tRNA(Glu). The sequence is that of Glutamate--tRNA ligase from Pelagibacter ubique (strain HTCC1062).